Reading from the N-terminus, the 92-residue chain is Conotoxin Ac8.1 (92 aa).

An N-terminal signal peptide occupies residues 1–19 (LKMGAMFVLLLLFTLASSQ). Residues 20–44 (QEGDVQARKTSLKSDFYRALRQYDR) constitute a propeptide that is removed on maturation. Glutamine 45 bears the Pyrrolidone carboxylic acid mark.

The protein belongs to the conotoxin S superfamily. Post-translationally, contains 5 disulfide bonds. As to expression, expressed by the venom duct.

Its subcellular location is the secreted. The polypeptide is Conotoxin Ac8.1 (Conus achatinus (Little frog cone)).